Here is a 557-residue protein sequence, read N- to C-terminus: NADP-dependent malic enzyme (557 aa).

Residue Tyr-91 is the Proton donor of the active site. Arg-144 provides a ligand contact to NADP(+). Lys-162 (proton acceptor) is an active-site residue. Residues Glu-234, Asp-235, and Asp-258 each contribute to the a divalent metal cation site. NADP(+) contacts are provided by residues Asp-258, 290–307 (GAGEAALGIANLIVMAME), and Asn-397.

Belongs to the malic enzymes family. In terms of assembly, homotetramer. The cofactor is Mg(2+). Mn(2+) is required as a cofactor.

The protein localises to the cytoplasm. The enzyme catalyses (S)-malate + NADP(+) = pyruvate + CO2 + NADPH. It carries out the reaction oxaloacetate + H(+) = pyruvate + CO2. This is NADP-dependent malic enzyme (ME1) from Anas platyrhynchos (Mallard).